A 384-amino-acid polypeptide reads, in one-letter code: Chorismate synthase (384 aa).

NADP(+) contacts are provided by Arg40 and Arg46. FMN contacts are provided by residues Arg128–Ser130, Gly292, Lys307–Thr311, and Arg333.

It belongs to the chorismate synthase family. As to quaternary structure, homotetramer. It depends on FMNH2 as a cofactor.

The catalysed reaction is 5-O-(1-carboxyvinyl)-3-phosphoshikimate = chorismate + phosphate. It functions in the pathway metabolic intermediate biosynthesis; chorismate biosynthesis; chorismate from D-erythrose 4-phosphate and phosphoenolpyruvate: step 7/7. Functionally, catalyzes the anti-1,4-elimination of the C-3 phosphate and the C-6 proR hydrogen from 5-enolpyruvylshikimate-3-phosphate (EPSP) to yield chorismate, which is the branch point compound that serves as the starting substrate for the three terminal pathways of aromatic amino acid biosynthesis. This reaction introduces a second double bond into the aromatic ring system. The chain is Chorismate synthase from Carboxydothermus hydrogenoformans (strain ATCC BAA-161 / DSM 6008 / Z-2901).